Here is a 507-residue protein sequence, read N- to C-terminus: Phosphoprotein (507 aa).

Residues 1–48 (MAEEQARHVKNGLECIRALKAEPIGSLAVEEAMAAWSEISDNPGQDRA) are interaction with N0. Disordered regions lie at residues 40–92 (SDNP…DAET), 133–168 (SGLD…ITDR), 201–228 (NNFP…ETPI), and 252–273 (TQCA…GNVP). Serine 86 bears the Phosphoserine mark. A compositionally biased stretch (low complexity) spans 133–143 (SGLDGDSTLSG). Over residues 144–160 (GDDESENSDVDIGEPDT) the composition is skewed to acidic residues. A Phosphoserine modification is found at serine 151. The segment covering 260 to 270 (SEPSGPGAPAG) has biased composition (low complexity). The segment at 304-376 (GDYYDDELFS…LSSIMIAIPG (73 aa)) is multimerization. Interaction with the L polymerase stretches follow at residues 361–377 (STLE…IPGL) and 396–410 (PIIG…AEVL). A x domain (XD) region spans residues 457-507 (GPASRSVIRSIIKSSRLEEDRKRYLMTLLDDIKGANDLAKFHQMLMKIIMK). Residues 459 to 507 (ASRSVIRSIIKSSRLEEDRKRYLMTLLDDIKGANDLAKFHQMLMKIIMK) are interaction with the nucleocapsid (N-RNA).

Belongs to the morbillivirus P protein family. In terms of assembly, homotetramer. Interacts (via multimerization domain and XD domain) with polymerase L; this interaction forms the polymerase L-P complex. Interacts (via N-terminus) with N0 (via Ncore); this interaction allows P to chaperon N0 to avoid N polymerization and non-specific RNA binding before encapsidation. Interacts (via C-terminus) with N-RNA template (via Ntail); this interaction maintains the P/L complex anchored to the nucleocapsid template during the sequential transcription. Interacts (via C-terminus) with protein C this interaction allows C to associate with the ribonucleocapsid. Phosphorylation on serines by host CK2 is necessary for the formation of viral factories.

In terms of biological role, essential cofactor of the RNA polymerase L that plays a central role in the transcription and replication by forming the polymerase complex with RNA polymerase L and recruiting L to the genomic N-RNA template for RNA synthesis. Also plays a central role in the encapsidation of nascent RNA chains by forming the encapsidation complex with the nucleocapsid protein N (N-P complex). Acts as a chaperone for newly synthesized free N protein, so-called N0, allowing encapsidation of nascent RNA chains during replication. The nucleoprotein protein N prevents excessive phosphorylation of P, which leads to down-regulation of viral transcription/ replication. Participates, together with N, in the formation of viral factories (viroplasms), which are large inclusions in the host cytoplasm where replication takes place. In Homo sapiens (Human), this protein is Phosphoprotein (P/V).